The sequence spans 400 residues: Deoxyguanosinetriphosphate triphosphohydrolase-like protein (400 aa).

The HD domain maps to 73-215; it reads RLTHSIEVSQ…AAIADDIAYN (143 aa).

It belongs to the dGTPase family. Type 2 subfamily.

The protein is Deoxyguanosinetriphosphate triphosphohydrolase-like protein of Bartonella quintana (strain Toulouse) (Rochalimaea quintana).